Consider the following 257-residue polypeptide: Glutamate racemase (257 aa).

Substrate contacts are provided by residues 12-13 (DS) and 44-45 (YG). The active-site Proton donor/acceptor is the Cys75. 76–77 (NT) lines the substrate pocket. Cys185 functions as the Proton donor/acceptor in the catalytic mechanism. 186 to 187 (TH) contacts substrate.

It belongs to the aspartate/glutamate racemases family.

The catalysed reaction is L-glutamate = D-glutamate. It participates in cell wall biogenesis; peptidoglycan biosynthesis. Its function is as follows. Provides the (R)-glutamate required for cell wall biosynthesis. The polypeptide is Glutamate racemase (Clostridium botulinum (strain Okra / Type B1)).